Consider the following 177-residue polypeptide: Large ribosomal subunit protein uL6 (177 aa).

At Lys-44 the chain carries N6-acetyllysine.

It belongs to the universal ribosomal protein uL6 family. In terms of assembly, part of the 50S ribosomal subunit.

Functionally, this protein binds to the 23S rRNA, and is important in its secondary structure. It is located near the subunit interface in the base of the L7/L12 stalk, and near the tRNA binding site of the peptidyltransferase center. This is Large ribosomal subunit protein uL6 from Shigella sonnei (strain Ss046).